The sequence spans 177 residues: Large ribosomal subunit protein uL6 (177 aa).

This sequence belongs to the universal ribosomal protein uL6 family. In terms of assembly, part of the 50S ribosomal subunit.

This protein binds to the 23S rRNA, and is important in its secondary structure. It is located near the subunit interface in the base of the L7/L12 stalk, and near the tRNA binding site of the peptidyltransferase center. This Psychromonas ingrahamii (strain DSM 17664 / CCUG 51855 / 37) protein is Large ribosomal subunit protein uL6.